A 566-amino-acid chain; its full sequence is Arginine--tRNA ligase (566 aa).

Residues 123–133 (PNIAKPFHIGH) carry the 'HIGH' region motif.

Belongs to the class-I aminoacyl-tRNA synthetase family. Monomer.

It is found in the cytoplasm. It catalyses the reaction tRNA(Arg) + L-arginine + ATP = L-arginyl-tRNA(Arg) + AMP + diphosphate. The protein is Arginine--tRNA ligase of Halothermothrix orenii (strain H 168 / OCM 544 / DSM 9562).